The chain runs to 167 residues: N5-carboxyaminoimidazole ribonucleotide mutase (167 aa).

Substrate is bound by residues Ser11, Asp14, and Arg41.

It belongs to the AIR carboxylase family. Class I subfamily.

It catalyses the reaction 5-carboxyamino-1-(5-phospho-D-ribosyl)imidazole + H(+) = 5-amino-1-(5-phospho-D-ribosyl)imidazole-4-carboxylate. The protein operates within purine metabolism; IMP biosynthesis via de novo pathway; 5-amino-1-(5-phospho-D-ribosyl)imidazole-4-carboxylate from 5-amino-1-(5-phospho-D-ribosyl)imidazole (N5-CAIR route): step 2/2. Its function is as follows. Catalyzes the conversion of N5-carboxyaminoimidazole ribonucleotide (N5-CAIR) to 4-carboxy-5-aminoimidazole ribonucleotide (CAIR). This is N5-carboxyaminoimidazole ribonucleotide mutase from Aquifex aeolicus (strain VF5).